The chain runs to 837 residues: Semaphorin-4G (837 aa).

The first 17 residues, 1–17 (MWGRLWPLLFSFLTVTA), serve as a signal peptide directing secretion. The Extracellular segment spans residues 18–673 (VPGPSLRRPS…GAQLAHDMRM (656 aa)). The region spanning 35–503 (RLTISYEELS…AASGVLQFPL (469 aa)) is the Sema domain. N-linked (GlcNAc...) asparagine glycans are attached at residues Asn55, Asn111, and Asn126. A disulfide bridge connects residues Cys104 and Cys115. Cystine bridges form between Cys133–Cys142, Cys268–Cys375, and Cys292–Cys335. Residue Asn386 is glycosylated (N-linked (GlcNAc...) asparagine). In terms of domain architecture, PSI spans 505 to 556 (SCSRYQSCYDCILARDPYCGWDSSIHACMVATTVANRTELIQDIERGNRGCE). Disulfide bonds link Cys506–Cys523 and Cys515–Cys532. Asn540 and Asn596 each carry an N-linked (GlcNAc...) asparagine glycan. The Ig-like C2-type domain occupies 565–647 (PPLKTRSVLR…RMLLASYSLT (83 aa)). A disulfide bridge connects residues Cys582 and Cys630. Residues 674–694 (FYVVAIAILGGLCLILASSLL) traverse the membrane as a helical segment. Topologically, residues 695 to 837 (YVACLKGGRR…LVEQLDESSV (143 aa)) are cytoplasmic. The tract at residues 721–776 (SAVQLQTVSGQCPGEEDEGDDGEGTGGLESGCLQIIPGEGAPAPPPPPPPPPPAEL) is disordered. A compositionally biased stretch (acidic residues) spans 734–743 (GEEDEGDDGE). A compositionally biased stretch (pro residues) spans 762 to 774 (PAPPPPPPPPPPA). Phosphoserine is present on residues Ser794 and Ser836.

Belongs to the semaphorin family. As to quaternary structure, interacts with PLXNB2. Brain, spinal cord, and several sensory organs as well as specific populations of projection neurons.

It localises to the cell membrane. In terms of biological role, cell surface receptor for PLXNB2. May play a role in axon guidance. This chain is Semaphorin-4G (Sema4g), found in Mus musculus (Mouse).